A 374-amino-acid chain; its full sequence is Tryptophan--tRNA ligase (374 aa).

The 'HIGH' region signature appears at 71–79 (PSGRMHLGH). The short motif at 247–251 (KMSSS) is the 'KMSKS' region element.

It belongs to the class-I aminoacyl-tRNA synthetase family.

It localises to the cytoplasm. The enzyme catalyses tRNA(Trp) + L-tryptophan + ATP = L-tryptophyl-tRNA(Trp) + AMP + diphosphate + H(+). The chain is Tryptophan--tRNA ligase from Methanopyrus kandleri (strain AV19 / DSM 6324 / JCM 9639 / NBRC 100938).